Consider the following 87-residue polypeptide: Small ribosomal subunit protein uS17 (87 aa).

It belongs to the universal ribosomal protein uS17 family. As to quaternary structure, part of the 30S ribosomal subunit.

Functionally, one of the primary rRNA binding proteins, it binds specifically to the 5'-end of 16S ribosomal RNA. This chain is Small ribosomal subunit protein uS17, found in Onion yellows phytoplasma (strain OY-M).